The following is a 375-amino-acid chain: Chaperone protein DnaJ (375 aa).

In terms of domain architecture, J spans 5 to 70 (DFYETLGVAK…QKRAAYDRYG (66 aa)). Residues 136-214 (GKTAQIRVPT…CHGQGRVTEE (79 aa)) form a CR-type zinc finger. Zn(2+) contacts are provided by cysteine 149, cysteine 152, cysteine 166, cysteine 169, cysteine 188, cysteine 191, cysteine 202, and cysteine 205. CXXCXGXG motif repeat units follow at residues 149-156 (CDVCSGSG), 166-173 (CGTCQGTG), 188-195 (CPTCHGRG), and 202-209 (CPKCHGQG).

It belongs to the DnaJ family. In terms of assembly, homodimer. Zn(2+) is required as a cofactor.

It localises to the cytoplasm. In terms of biological role, participates actively in the response to hyperosmotic and heat shock by preventing the aggregation of stress-denatured proteins and by disaggregating proteins, also in an autonomous, DnaK-independent fashion. Unfolded proteins bind initially to DnaJ; upon interaction with the DnaJ-bound protein, DnaK hydrolyzes its bound ATP, resulting in the formation of a stable complex. GrpE releases ADP from DnaK; ATP binding to DnaK triggers the release of the substrate protein, thus completing the reaction cycle. Several rounds of ATP-dependent interactions between DnaJ, DnaK and GrpE are required for fully efficient folding. Also involved, together with DnaK and GrpE, in the DNA replication of plasmids through activation of initiation proteins. The chain is Chaperone protein DnaJ from Rhizobium etli (strain ATCC 51251 / DSM 11541 / JCM 21823 / NBRC 15573 / CFN 42).